The sequence spans 344 residues: DNA-directed RNA polymerase subunit alpha (344 aa).

An alpha N-terminal domain (alpha-NTD) region spans residues 1-246 (MPMERFLKDF…EFLFPLVDFE (246 aa)). The interval 259-344 (ESSNLLDMSI…VLSKNVKISE (86 aa)) is alpha C-terminal domain (alpha-CTD).

It belongs to the RNA polymerase alpha chain family. Homodimer. The RNAP catalytic core consists of 2 alpha, 1 beta, 1 beta' and 1 omega subunit. When a sigma factor is associated with the core the holoenzyme is formed, which can initiate transcription.

The catalysed reaction is RNA(n) + a ribonucleoside 5'-triphosphate = RNA(n+1) + diphosphate. Functionally, DNA-dependent RNA polymerase catalyzes the transcription of DNA into RNA using the four ribonucleoside triphosphates as substrates. This Borreliella afzelii (strain PKo) (Borrelia afzelii) protein is DNA-directed RNA polymerase subunit alpha.